The chain runs to 257 residues: GTP cyclohydrolase FolE2 (257 aa).

It belongs to the GTP cyclohydrolase IV family.

The catalysed reaction is GTP + H2O = 7,8-dihydroneopterin 3'-triphosphate + formate + H(+). The protein operates within cofactor biosynthesis; 7,8-dihydroneopterin triphosphate biosynthesis; 7,8-dihydroneopterin triphosphate from GTP: step 1/1. Functionally, converts GTP to 7,8-dihydroneopterin triphosphate. The sequence is that of GTP cyclohydrolase FolE2 from Pelobacter propionicus (strain DSM 2379 / NBRC 103807 / OttBd1).